The sequence spans 73 residues: Translation initiation factor IF-1 (73 aa).

Residues 1-73 form the S1-like domain; it reads MANKEELIEF…TKGRITYRAR (73 aa).

The protein belongs to the IF-1 family. Component of the 30S ribosomal translation pre-initiation complex which assembles on the 30S ribosome in the order IF-2 and IF-3, IF-1 and N-formylmethionyl-tRNA(fMet); mRNA recruitment can occur at any time during PIC assembly.

The protein localises to the cytoplasm. Its function is as follows. One of the essential components for the initiation of protein synthesis. Stabilizes the binding of IF-2 and IF-3 on the 30S subunit to which N-formylmethionyl-tRNA(fMet) subsequently binds. Helps modulate mRNA selection, yielding the 30S pre-initiation complex (PIC). Upon addition of the 50S ribosomal subunit IF-1, IF-2 and IF-3 are released leaving the mature 70S translation initiation complex. This Acinetobacter baumannii (strain ATCC 17978 / DSM 105126 / CIP 53.77 / LMG 1025 / NCDC KC755 / 5377) protein is Translation initiation factor IF-1.